The following is a 361-amino-acid chain: Alanine racemase (361 aa).

The active-site Proton acceptor; specific for D-alanine is the K34. K34 bears the N6-(pyridoxal phosphate)lysine mark. R129 contacts substrate. Catalysis depends on Y256, which acts as the Proton acceptor; specific for L-alanine. Residue M304 participates in substrate binding.

Belongs to the alanine racemase family. In terms of assembly, homodimer. The cofactor is pyridoxal 5'-phosphate.

The enzyme catalyses L-alanine = D-alanine. It functions in the pathway amino-acid biosynthesis; D-alanine biosynthesis; D-alanine from L-alanine: step 1/1. Its function is as follows. Catalyzes the interconversion of L-alanine and D-alanine. May also act on other amino acids. The sequence is that of Alanine racemase (alr) from Corynebacterium glutamicum (strain ATCC 13032 / DSM 20300 / JCM 1318 / BCRC 11384 / CCUG 27702 / LMG 3730 / NBRC 12168 / NCIMB 10025 / NRRL B-2784 / 534).